The following is a 298-amino-acid chain: Tyrosine recombinase XerD (298 aa).

Positions 3-88 constitute a Core-binding (CB) domain; sequence TLEHPLIDRF…GLRGFYRYCL (86 aa). Residues 109–292 form the Tyr recombinase domain; it reads PLPKSLSEAD…ARARLQDLHA (184 aa). Catalysis depends on residues R149, K173, H244, R247, and H270. Y279 functions as the O-(3'-phospho-DNA)-tyrosine intermediate in the catalytic mechanism.

The protein belongs to the 'phage' integrase family. XerD subfamily. Forms a cyclic heterotetrameric complex composed of two molecules of XerC and two molecules of XerD.

It is found in the cytoplasm. Functionally, site-specific tyrosine recombinase, which acts by catalyzing the cutting and rejoining of the recombining DNA molecules. The XerC-XerD complex is essential to convert dimers of the bacterial chromosome into monomers to permit their segregation at cell division. It also contributes to the segregational stability of plasmids. In Pseudomonas aeruginosa (strain ATCC 15692 / DSM 22644 / CIP 104116 / JCM 14847 / LMG 12228 / 1C / PRS 101 / PAO1), this protein is Tyrosine recombinase XerD.